Consider the following 112-residue polypeptide: Nitrogen regulatory protein P-II 1 (112 aa).

Tyrosine 51 is modified (O-UMP-tyrosine).

It belongs to the P(II) protein family. In terms of assembly, homotrimer. In terms of processing, uridylylated/deuridylylated by GlnD.

Its function is as follows. P-II indirectly controls the transcription of the glutamine synthetase gene (GlnA). P-II prevents NR-II-catalyzed conversion of NR-I to NR-I-phosphate, the transcriptional activator of GlnA. When P-II is uridylylated to P-II-UMP, these events are reversed. When the ratio of Gln to 2-ketoglutarate decreases, P-II is uridylylated to P-II-UMP, which causes the deadenylation of glutamine synthetase by GlnE, so activating the enzyme. This is Nitrogen regulatory protein P-II 1 (glnB) from Escherichia coli O157:H7.